The following is a 294-amino-acid chain: Secreted frizzled-related protein 2 (294 aa).

The signal sequence occupies residues 1–24; sequence MPRGPGSLLLLVLASHCCLGSARG. Residues 34 to 154 form the FZ domain; that stretch reads YKRSNCKPIP…PQDNDLCIPL (121 aa). 8 cysteine pairs are disulfide-bonded: Cys-39–Cys-102, Cys-49–Cys-95, Cys-86–Cys-124, Cys-113–Cys-151, Cys-117–Cys-141, Cys-171–Cys-244, Cys-174–Cys-246, and Cys-189–Cys-294. In terms of domain architecture, NTR spans 171 to 294; that stretch reads CEACKNKNED…ISRSIRKLQC (124 aa).

The protein belongs to the secreted frizzled-related protein (sFRP) family.

The protein localises to the secreted. Soluble frizzled-related proteins (sFRPS) function as modulators of Wnt signaling through direct interaction with Wnts. They have a role in regulating cell growth and differentiation in specific cell types. SFRP2 may be important for eye retinal development and for myogenesis. In Canis lupus familiaris (Dog), this protein is Secreted frizzled-related protein 2 (SFRP2).